The sequence spans 88 residues: MWHNVGLTLLVFVATLLIVLLLMVCGWYFVWHLFLSKFKFLRELVGDTGSQEGDNEQPSGSETEEDPSASPQKIRSARQRRPPVDAGH.

A helical transmembrane segment spans residues 10-30 (LVFVATLLIVLLLMVCGWYFV). Over residues 48–61 (TGSQEGDNEQPSGS) the composition is skewed to polar residues. A disordered region spans residues 48–88 (TGSQEGDNEQPSGSETEEDPSASPQKIRSARQRRPPVDAGH). A phosphoserine mark is found at serine 59 and serine 61. Threonine 63 is modified (phosphothreonine). A Phosphoserine modification is found at serine 70.

This sequence belongs to the SMIM13 family.

It is found in the membrane. This Mus musculus (Mouse) protein is Small integral membrane protein 13 (Smim13).